We begin with the raw amino-acid sequence, 33 residues long: Natriuretic peptide NP2 (33 aa).

The cysteines at positions 10 and 26 are disulfide-linked.

In terms of tissue distribution, expressed by the venom gland.

It is found in the secreted. Its function is as follows. Snake venom natriuretic peptide that shows an increase in perfusion pressure, urinary flow and glomerular filtration rate. Reduces total and proximal tubular transport of sodium. In the aortic ring assay, causes a relaxant effect in endothelium-intact thoracic aortic rings precontracted with phenylephrine in the presence and absence of isatin, a natriuretic receptor antagonist. The protein is Natriuretic peptide NP2 of Crotalus durissus cascavella (Northeastern Brazilian rattlesnake).